A 437-amino-acid polypeptide reads, in one-letter code: Amino-acid acetyltransferase (437 aa).

In terms of domain architecture, N-acetyltransferase spans 289–429 (ENIRLATSFD…EHYNYQRMSK (141 aa)).

The protein belongs to the acetyltransferase family. ArgA subfamily.

The protein localises to the cytoplasm. It carries out the reaction L-glutamate + acetyl-CoA = N-acetyl-L-glutamate + CoA + H(+). Its pathway is amino-acid biosynthesis; L-arginine biosynthesis; N(2)-acetyl-L-ornithine from L-glutamate: step 1/4. In Actinobacillus pleuropneumoniae serotype 7 (strain AP76), this protein is Amino-acid acetyltransferase.